The following is a 367-amino-acid chain: Uptake hydrogenase small subunit (367 aa).

The tat-type signal signal peptide spans 1–45 (MTPTETFYEVMRRQGVTRRSFLKFCSLTATALGLGPAYTSEIAHA). Positions 62, 65, 160, 194, 232, 235, 260, and 266 each coordinate [4Fe-4S] cluster. [3Fe-4S] cluster contacts are provided by Cys275, Cys294, and Cys297.

It belongs to the [NiFe]/[NiFeSe] hydrogenase small subunit family. Heterodimer of a large and a small subunit. [4Fe-4S] cluster serves as cofactor. The cofactor is [3Fe-4S] cluster. In terms of processing, predicted to be exported by the Tat system. The position of the signal peptide cleavage has been experimentally proven.

It is found in the cell membrane. The catalysed reaction is H2 + A = AH2. This enzyme recycles the H(2) produced by nitrogenase to increase the production of ATP and to protect nitrogenase against inhibition or damage by O(2) under carbon- or phosphate-limited conditions. In Afipia carboxidovorans (strain ATCC 49405 / DSM 1227 / KCTC 32145 / OM5) (Oligotropha carboxidovorans), this protein is Uptake hydrogenase small subunit (hoxS).